A 79-amino-acid chain; its full sequence is Small cysteine-rich protein 2 (79 aa).

Residues 1-21 form the signal peptide; the sequence is MRSQHVLILLLGLVCASQVLG. A propeptide spanning residues 22 to 35 is cleaved from the precursor; sequence KHLTKVKAKALHYD.

Belongs to the Cnidaria small cysteine-rich protein (SCRiP) family. delta subfamily. In terms of processing, contains 4 disulfide bonds.

The protein localises to the secreted. It localises to the nematocyst. Functionally, this recombinant protein induces severe neurotoxicity on zebrafish larvae (Danio rerio) at a concentration of 230 mg/ml, but does not show toxicity when injected in blowfly larvae (Sarcophaga falculata). All fish incubated with this protein died within 200 minutes of exposure. Has also been claimed to be implied in calcification, but this function seems improbable. This Acropora millepora (Staghorn coral) protein is Small cysteine-rich protein 2.